A 192-amino-acid polypeptide reads, in one-letter code: Putative integrase/recombinase y4gC (192 aa).

In terms of domain architecture, Tyr recombinase spans Met1–Leu183. Active-site residues include Arg41, Lys66, His135, Arg138, and His161. Tyr170 acts as the O-(3'-phospho-DNA)-tyrosine intermediate in catalysis.

Belongs to the 'phage' integrase family.

This is Putative integrase/recombinase y4gC from Sinorhizobium fredii (strain NBRC 101917 / NGR234).